Here is a 156-residue protein sequence, read N- to C-terminus: Ribonuclease H (156 aa).

One can recognise an RNase H type-1 domain in the interval 3 to 144 (ERKLIHIFTD…CDILARSAAE (142 aa)). Mg(2+) is bound by residues D12, E50, D72, and D136.

The protein belongs to the RNase H family. In terms of assembly, monomer. Mg(2+) is required as a cofactor.

Its subcellular location is the cytoplasm. The catalysed reaction is Endonucleolytic cleavage to 5'-phosphomonoester.. Functionally, endonuclease that specifically degrades the RNA of RNA-DNA hybrids. The chain is Ribonuclease H from Shewanella putrefaciens (strain CN-32 / ATCC BAA-453).